Consider the following 473-residue polypeptide: Purple acid phosphatase 1 (473 aa).

Residues 1 to 38 (MRLVVVGLWCLILGLILNPTKFCDAGVTSSYVRKSLSA) form the signal peptide. Asparagine 118 carries N-linked (GlcNAc...) asparagine glycosylation. Aspartate 172 lines the Fe cation pocket. N-linked (GlcNAc...) asparagine glycosylation is present at asparagine 180. The Fe cation site is built by aspartate 201 and tyrosine 204. Position 201 (aspartate 201) interacts with Mn(2+). Position 238 (asparagine 238) interacts with Mn(2+). Asparagine 238 provides a ligand contact to substrate. An N-linked (GlcNAc...) asparagine glycan is attached at asparagine 311. Histidine 323 lines the Mn(2+) pocket. Histidine 333 serves as the catalytic Proton donor. Histidine 360 provides a ligand contact to Mn(2+). 360-362 (HVH) is a substrate binding site. Position 362 (histidine 362) interacts with Fe cation. An N-linked (GlcNAc...) asparagine glycan is attached at asparagine 433.

It belongs to the metallophosphoesterase superfamily. Purple acid phosphatase family. As to quaternary structure, homodimer; disulfide-linked. It depends on Fe cation as a cofactor. Requires Mn(2+) as cofactor. Zn(2+) is required as a cofactor. The cofactor is Cu(2+). Mg(2+) serves as cofactor.

Its subcellular location is the secreted. It carries out the reaction a phosphate monoester + H2O = an alcohol + phosphate. In Ipomoea batatas (Sweet potato), this protein is Purple acid phosphatase 1 (PAP1).